The primary structure comprises 151 residues: MSEKLICNNKKAYHDYFIEEKFEAGMVLKGTEVKSLRIGKANLNDSFALVKNGEAFLHNLHISPYDFGNRENHDPDRMRKLLLHKKEIGKLFSMIREQGYTVVPLRLYFKDGLVKVEVGLAKGKKLYDKREDMKKKDMRRDVAVALKERNR.

Belongs to the SmpB family.

Its subcellular location is the cytoplasm. Functionally, required for rescue of stalled ribosomes mediated by trans-translation. Binds to transfer-messenger RNA (tmRNA), required for stable association of tmRNA with ribosomes. tmRNA and SmpB together mimic tRNA shape, replacing the anticodon stem-loop with SmpB. tmRNA is encoded by the ssrA gene; the 2 termini fold to resemble tRNA(Ala) and it encodes a 'tag peptide', a short internal open reading frame. During trans-translation Ala-aminoacylated tmRNA acts like a tRNA, entering the A-site of stalled ribosomes, displacing the stalled mRNA. The ribosome then switches to translate the ORF on the tmRNA; the nascent peptide is terminated with the 'tag peptide' encoded by the tmRNA and targeted for degradation. The ribosome is freed to recommence translation, which seems to be the essential function of trans-translation. The protein is SsrA-binding protein of Geotalea uraniireducens (strain Rf4) (Geobacter uraniireducens).